We begin with the raw amino-acid sequence, 482 residues long: Scarecrow-like protein 3 (482 aa).

One can recognise a GRAS domain in the interval 45–479 (LKPEERGLYL…RPLYSVSAWR (435 aa)). A leucine repeat I (LRI) region spans residues 52 to 115 (LYLIHLLLTC…ILKSWPGLYK (64 aa)). Positions 134 to 199 (RRLFFEMFPI…EGPPHLRITG (66 aa)) are VHIID. The short motif at 165-169 (VHVID) is the VHIID element. Positions 209-241 (QMAHRLIEEAEKLDIPFQFNPVVSRLDCLNVEQ) are leucine repeat II (LRII). The segment at 250-401 (LAVSSVLQLH…KMLFGEEIKN (152 aa)) is PFYRE. Positions 302-324 (ENDMSNNNGYSPSGDSASSLPLP) are disordered. The span at 305-324 (MSNNNGYSPSGDSASSLPLP) shows a compositional bias: polar residues. An SAW region spans residues 404–479 (SCEGFERRER…RPLYSVSAWR (76 aa)).

The protein belongs to the GRAS family. Binds to zinc finger proteins MGP/IDD3, IDD4, IDD5, BIB/IDD9 and JKD/IDD10. In terms of tissue distribution, expressed in seedlings, root epidermis, leaves, flowers and siliques.

The protein localises to the nucleus. Functionally, probable transcription factor involved in plant development. This is Scarecrow-like protein 3 from Arabidopsis thaliana (Mouse-ear cress).